The sequence spans 301 residues: Protease HtpX (301 aa).

2 consecutive transmembrane segments (helical) span residues 4–24 and 38–58; these read IGLFLLTNLAVLVVAGIILSL and LGNLLVICFVFGMVGSLISLL. H147 is a Zn(2+) binding site. The active site involves E148. H151 is a Zn(2+) binding site. 2 helical membrane passes run 155-175 and 200-220; these read GDMVTLALIQGVVNAFVMFFA and FAITIVLDIVFGILASAIVMW. Residue E226 coordinates Zn(2+).

This sequence belongs to the peptidase M48B family. Zn(2+) serves as cofactor.

Its subcellular location is the cell inner membrane. The protein is Protease HtpX of Acinetobacter baylyi (strain ATCC 33305 / BD413 / ADP1).